We begin with the raw amino-acid sequence, 734 residues long: Photosystem I P700 chlorophyll a apoprotein A2 (734 aa).

The next 8 membrane-spanning stretches (helical) occupy residues 46–69, 135–158, 175–199, 273–291, 330–353, 369–395, 417–439, and 517–535; these read IFAS…FHVA, LYGG…LHLQ, LNHH…HVAI, MAHH…GHMY, LHFQ…QHMY, AALY…IFFI, AIIS…LYVH, and FLVH…LILV. [4Fe-4S] cluster-binding residues include cysteine 559 and cysteine 568. 2 consecutive transmembrane segments (helical) span residues 575 to 596 and 643 to 665; these read AFYL…YWHW and LSVW…MFLI. Histidine 654, methionine 662, and tyrosine 670 together coordinate chlorophyll a. Tryptophan 671 contributes to the phylloquinone binding site. The helical transmembrane segment at 707–727 threads the bilayer; it reads LVGLAHFSVGYIFTYAAFLIA.

It belongs to the PsaA/PsaB family. The PsaA/B heterodimer binds the P700 chlorophyll special pair and subsequent electron acceptors. PSI consists of a core antenna complex that captures photons, and an electron transfer chain that converts photonic excitation into a charge separation. The eukaryotic PSI reaction center is composed of at least 11 subunits. Requires P700 is a chlorophyll a/chlorophyll a' dimer, A0 is one or more chlorophyll a, A1 is one or both phylloquinones and FX is a shared 4Fe-4S iron-sulfur center. as cofactor.

It localises to the plastid. The protein localises to the chloroplast thylakoid membrane. The enzyme catalyses reduced [plastocyanin] + hnu + oxidized [2Fe-2S]-[ferredoxin] = oxidized [plastocyanin] + reduced [2Fe-2S]-[ferredoxin]. PsaA and PsaB bind P700, the primary electron donor of photosystem I (PSI), as well as the electron acceptors A0, A1 and FX. PSI is a plastocyanin-ferredoxin oxidoreductase, converting photonic excitation into a charge separation, which transfers an electron from the donor P700 chlorophyll pair to the spectroscopically characterized acceptors A0, A1, FX, FA and FB in turn. Oxidized P700 is reduced on the lumenal side of the thylakoid membrane by plastocyanin. This chain is Photosystem I P700 chlorophyll a apoprotein A2, found in Physcomitrium patens (Spreading-leaved earth moss).